Reading from the N-terminus, the 85-residue chain is UPF0335 protein BH15140 (85 aa).

Belongs to the UPF0335 family.

The chain is UPF0335 protein BH15140 from Bartonella henselae (strain ATCC 49882 / DSM 28221 / CCUG 30454 / Houston 1) (Rochalimaea henselae).